Here is a 332-residue protein sequence, read N- to C-terminus: L-lactate dehydrogenase A chain (332 aa).

At Ala2 the chain carries N-acetylalanine. Position 5 is an N6-acetyllysine; alternate (Lys5). At Lys5 the chain carries N6-succinyllysine; alternate. Lys14 carries the post-translational modification N6-acetyllysine. Position 29–57 (29–57 (GAVGMACAISILMKDLADEVALVDVMEDK)) interacts with NAD(+). Lys57 is subject to N6-acetyllysine; alternate. Residue Lys57 forms a Glycyl lysine isopeptide (Lys-Gly) (interchain with G-Cter in SUMO2); alternate linkage. Residue Lys81 is modified to N6-acetyllysine. Arg106 is a binding site for substrate. Lys118 is subject to N6-acetyllysine; alternate. Residue Lys118 is modified to N6-succinyllysine; alternate. Residue Lys126 is modified to N6-acetyllysine. Asn138 serves as a coordination point for NAD(+). 2 residues coordinate substrate: Asn138 and Arg169. The Proton acceptor role is filled by His193. N6-acetyllysine occurs at positions 224 and 232. Phosphotyrosine is present on Tyr239. Lys243 is modified (N6-acetyllysine). Thr248 contacts substrate. Thr309 is subject to Phosphothreonine. N6-acetyllysine; alternate is present on Lys318. Lys318 carries the post-translational modification N6-succinyllysine; alternate. Thr322 bears the Phosphothreonine mark.

It belongs to the LDH/MDH superfamily. LDH family. As to quaternary structure, homotetramer. Interacts with PTEN upstream reading frame protein MP31. In terms of processing, ISGylated.

The protein resides in the cytoplasm. The enzyme catalyses (S)-lactate + NAD(+) = pyruvate + NADH + H(+). The protein operates within fermentation; pyruvate fermentation to lactate; (S)-lactate from pyruvate: step 1/1. Interconverts simultaneously and stereospecifically pyruvate and lactate with concomitant interconversion of NADH and NAD(+). This is L-lactate dehydrogenase A chain (LDHA) from Bos taurus (Bovine).